Reading from the N-terminus, the 128-residue chain is LIM domain-containing protein 2 (128 aa).

Residue methionine 1 is modified to N-acetylmethionine. The disordered stretch occupies residues 1–25 (MFQAAGAAQATPSHEAKGSSGNSTV). Residues 39 to 99 (ETCAACQKTV…KPHFQQLFKS (61 aa)) form the LIM zinc-binding domain. Positions 41, 44, 62, 65, 68, 71, 89, and 92 each coordinate Zn(2+).

As to quaternary structure, interacts with ILK.

Its subcellular location is the cytoplasm. The protein localises to the nucleus. In terms of biological role, acts as an activator of the protein-kinase ILK, thereby regulating cell motility. The polypeptide is LIM domain-containing protein 2 (Limd2) (Rattus norvegicus (Rat)).